A 564-amino-acid chain; its full sequence is Pumilio homolog 9 (564 aa).

The region spanning 222–564 (LEDTVLIGQG…KIFSKTILKK (343 aa)) is the PUM-HD domain. 8 Pumilio repeats span residues 249 to 284 (EIYG…VILL), 285 to 320 (AIID…LIVS), 321 to 359 (VLTS…ALVK), 361 to 396 (GLKP…FVLE), 397 to 432 (AATK…RLVA), 433 to 469 (EISR…VQFR), 470 to 501 (MHYA…EIVR), and 502 to 539 (ELLC…KLVA).

Its subcellular location is the cytoplasm. Its function is as follows. Sequence-specific RNA-binding protein that regulates translation and mRNA stability by binding the 3'-UTR of target mRNAs. This chain is Pumilio homolog 9 (APUM9), found in Arabidopsis thaliana (Mouse-ear cress).